A 377-amino-acid polypeptide reads, in one-letter code: Flagellin C (377 aa).

Coiled-coil stretches lie at residues 103–129 (SNSKADRVAIQEEITALNDELNRVAET) and 301–340 (VDSHRAELGAFQNRFNHAINNLDNINENVNASKSRIKDTD).

It belongs to the bacterial flagellin family. In terms of assembly, heteromer of multiple flagellin subunits including FlaA, FlaB, FlaC, FlaD and FlaE.

Its subcellular location is the secreted. The protein localises to the bacterial flagellum. Its function is as follows. Flagellin is the subunit protein which polymerizes to form the filaments of bacterial flagella. FlaC is not essential for flagellar synthesis and motility. This is Flagellin C (flaC) from Vibrio cholerae serotype O1 (strain ATCC 39541 / Classical Ogawa 395 / O395).